The sequence spans 248 residues: PF03932 family protein CutC (248 aa).

Belongs to the CutC family. As to quaternary structure, homodimer.

The protein localises to the cytoplasm. The protein is PF03932 family protein CutC of Escherichia coli O7:K1 (strain IAI39 / ExPEC).